The primary structure comprises 537 residues: DEAD-box ATP-dependent RNA helicase 5 (537 aa).

Positions 1 to 97 are disordered; the sequence is MAGQKQELPV…EDLGEGESEQ (97 aa). Residues 22 to 80 are a coiled coil; that stretch reads TNKKKKKSKKNKHTEENHEVEEVPQEVTNGVEEELSNKEKKKKRKREEKESEKNKKKDV. Residues 23–33 are compositionally biased toward basic residues; the sequence is NKKKKKSKKNK. Over residues 68–87 the composition is skewed to basic and acidic residues; it reads EEKESEKNKKKDVPEKKLEA. Positions 116–142 match the Q motif motif; it reads KTFAESNLPENVLDCCKTFEKPSPIQS. Residues 145 to 324 form the Helicase ATP-binding domain; the sequence is WPFLLDGRDL…QEFMDPNPIK (180 aa). Residue 158–165 participates in ATP binding; that stretch reads AKTGSGKT. The DEAD box motif lies at 272 to 275; it reads DEAD. Residues 349–500 form the Helicase C-terminal domain; that stretch reads ARDQRLIALL…VVPADLLKFG (152 aa). Position 533 is a phosphoserine (S533).

The protein belongs to the DEAD box helicase family. DDX5/DBP2 subfamily.

It localises to the nucleus. The protein resides in the nucleolus. The catalysed reaction is ATP + H2O = ADP + phosphate + H(+). Its function is as follows. ATP-dependent RNA helicase required for 60S ribosomal subunit synthesis. Involved in efficient pre-rRNA processing, predominantly at site A3, which is necessary for the normal formation of 25S and 5.8S rRNAs. The protein is DEAD-box ATP-dependent RNA helicase 5 (RH5) of Arabidopsis thaliana (Mouse-ear cress).